Reading from the N-terminus, the 185-residue chain is Peptidyl-tRNA hydrolase (185 aa).

Tyr-14 is a binding site for tRNA. His-19 functions as the Proton acceptor in the catalytic mechanism. Residues Tyr-65, Asn-67, and Asn-113 each contribute to the tRNA site.

This sequence belongs to the PTH family. Monomer.

It is found in the cytoplasm. It carries out the reaction an N-acyl-L-alpha-aminoacyl-tRNA + H2O = an N-acyl-L-amino acid + a tRNA + H(+). Hydrolyzes ribosome-free peptidyl-tRNAs (with 1 or more amino acids incorporated), which drop off the ribosome during protein synthesis, or as a result of ribosome stalling. Functionally, catalyzes the release of premature peptidyl moieties from peptidyl-tRNA molecules trapped in stalled 50S ribosomal subunits, and thus maintains levels of free tRNAs and 50S ribosomes. In Rickettsia felis (strain ATCC VR-1525 / URRWXCal2) (Rickettsia azadi), this protein is Peptidyl-tRNA hydrolase.